The chain runs to 286 residues: N-alpha-acetyltransferase 80 (286 aa).

Residues 33–54 (TFNPGPTELTLDPEHQPEETPA) are disordered. An N-acetyltransferase domain is found at 60 to 207 (LTLEPVHRRP…VFTSRRLPAT (148 aa)). Residues Arg85 and 90–93 (RLHS) each bind substrate. Acetyl-CoA is bound by residues 141–143 (VVV), 149–154 (GRGFGR), and Gln179. Residues 212–269 (FPTAPSPRPPRKAPNLTAQAAPRGPKGPPLPPPPPLPECLTISPPVPSGPPSKSLLET) form a disordered region. The segment covering 236-248 (PKGPPLPPPPPLP) has biased composition (pro residues).

The protein belongs to the acetyltransferase family. As to expression, strongly expressed in heart and skeletal muscle, followed by brain and pancreas, with weak expression in kidney, liver, and lung and no expression in placenta.

It localises to the cytoplasm. The protein localises to the cytosol. It catalyses the reaction N-terminal L-aspartyl-L-aspartyl-L-aspartyl-[protein] + acetyl-CoA = N-terminal N-acetyl-L-aspartyl-L-aspartyl-L-aspartyl-[protein] + CoA + H(+). It carries out the reaction N-terminal L-glutamyl-L-glutamyl-L-glutamyl-[protein] + acetyl-CoA = N-terminal N-acetyl-L-glutamyl-L-glutamyl-L-glutamyl-[protein] + CoA + H(+). Functionally, N-alpha-acetyltransferase that specifically mediates the acetylation of the acidic amino terminus of processed forms of beta- and gamma-actin (ACTB and ACTG, respectively). N-terminal acetylation of processed beta- and gamma-actin regulates actin filament depolymerization and elongation. In vivo, preferentially displays N-terminal acetyltransferase activity towards acid N-terminal sequences starting with Asp-Asp-Asp and Glu-Glu-Glu. In vitro, shows high activity towards Met-Asp-Glu-Leu and Met-Asp-Asp-Asp. May act as a tumor suppressor. This Homo sapiens (Human) protein is N-alpha-acetyltransferase 80.